The chain runs to 311 residues: Chalcone synthase 4 (311 aa).

Residue C164 is part of the active site.

It belongs to the thiolase-like superfamily. Chalcone/stilbene synthases family.

The catalysed reaction is (E)-4-coumaroyl-CoA + 3 malonyl-CoA + 3 H(+) = 2',4,4',6'-tetrahydroxychalcone + 3 CO2 + 4 CoA. Its pathway is secondary metabolite biosynthesis; flavonoid biosynthesis. The primary product of this enzyme is 4,2',4',6'-tetrahydroxychalcone (also termed naringenin-chalcone or chalcone) which can under specific conditions spontaneously isomerize into naringenin. The polypeptide is Chalcone synthase 4 (CHS4) (Trifolium subterraneum (Subterranean clover)).